Consider the following 308-residue polypeptide: D-alanine--D-alanine ligase (308 aa).

Residues 105–302 enclose the ATP-grasp domain; that stretch reads KAIFRSLGLA…FPDLCERILD (198 aa). Position 133-188 (133-188) interacts with ATP; it reads DLPFGLPCVVKPAGEGSSVGVHLVNEAAELGPACRDAASHAGDVIVERYVKGTEVD. Positions 256, 269, and 271 each coordinate Mg(2+).

It belongs to the D-alanine--D-alanine ligase family. Mg(2+) serves as cofactor. The cofactor is Mn(2+).

The protein resides in the cytoplasm. It carries out the reaction 2 D-alanine + ATP = D-alanyl-D-alanine + ADP + phosphate + H(+). Its pathway is cell wall biogenesis; peptidoglycan biosynthesis. Cell wall formation. This is D-alanine--D-alanine ligase from Anaeromyxobacter dehalogenans (strain 2CP-1 / ATCC BAA-258).